The primary structure comprises 128 residues: Large-conductance mechanosensitive channel (128 aa).

Transmembrane regions (helical) follow at residues 11–31 and 70–90; these read FALK…AAFG and GAFI…FIFV.

Belongs to the MscL family. In terms of assembly, homopentamer.

The protein resides in the cell membrane. Its function is as follows. Channel that opens in response to stretch forces in the membrane lipid bilayer. May participate in the regulation of osmotic pressure changes within the cell. This is Large-conductance mechanosensitive channel from Listeria innocua serovar 6a (strain ATCC BAA-680 / CLIP 11262).